The sequence spans 778 residues: MLLTCTNSLKISSQAKEWESKTLTGMSLEQLNKRIRIPASDIEGTMTSRVKEMLSKVELSVSSYDTAWVAMVPTLDSSKQPLFPKSLKWIMENQQPDGSWGLDLSHPLLIKDSLSSTLACVLALQKWNVGQQLVHKGLDFVQSNIWAATDEHQRSPIGFDMIFPSMIEYGRDMGLNLSLNQSLVEAMLLKRDLETKRLFYYLKDKPSNLAYVAEGLNTLNDWKEVMKFQRSNGSLFNSPSSTAAALIHLHDGKCFEYLNSLTKKFGNAVPTIYPFDIYARLFVIDSLEKLGIDRYVREDKEKMLDDIYRCWMQGSEEIFSDPTCCAMAFRILRTNGYAISSDALANFDEKESLFYEKDAKSTLELFKASQTTIFQDEPVLDKINAWTSTYLEKELRDGTIPDKSLHAEVDYALKHIQANLVRLEHRSYIENYNVDNVSLLKASYRFCNVDNRDLLTFSFQDYNMCQSMHRKELDYLEGWIKKCGIDQLEYARQTIKYAAFSIASSIFQPKFSDGRISWAQNSVLTTIVDDFFDYGGSMEELVNLIELVQRWDDHTTIGYKSKEVEILFNAVYSTTNDLADKARILQGRCVKKHMIDSWIFLLKAMLKEAEWARNKIVPTMDDFIPNGYISFALGPIILTSLYLVEPLSEEAVNSEEYEKLYMVISILGRLINDRVATQSDGAQGKLNIVTLEVINGKGAITEEEVQEKVARTIDSNRRELLRMVSQTEGSIVPKACKDFFWTMSNVLHLFYMGDDGYSSPTKMMSAVNAVINEPIVLP.

A chloroplast-targeting transit peptide spans 1–37 (MLLTCTNSLKISSQAKEWESKTLTGMSLEQLNKRIRI). 5 residues coordinate Mg(2+): aspartate 529, aspartate 533, asparagine 672, aspartate 673, and aspartate 680. Residues 529–533 (DDFFD) carry the DDXXD motif motif.

This sequence belongs to the terpene synthase family. The cofactor is Mg(2+).

It localises to the plastid. Its subcellular location is the chloroplast. The catalysed reaction is ent-copalyl diphosphate = ent-trachylobane + diphosphate. It catalyses the reaction ent-copalyl diphosphate = ent-kaur-16-ene + diphosphate. It functions in the pathway secondary metabolite biosynthesis; terpenoid biosynthesis. Diterpene cyclase involved in the biosynthesis of labdane-related diterpenoids (LRDs) natural products. Catalyzes the cyclization of ent-CDP into ent-trachylobane as a major and ent-kaurene as a minor product. This chain is Ent-trachylobane synthase KSL2, chloroplastic, found in Ricinus communis (Castor bean).